The primary structure comprises 150 residues: MEIFTIKYNASLFSNKTLRDKVYKILKENTKSYYESNSNGFFRIGGISRVDYINNNSIYFKGECKKYFGKNEVIITNFWIFKNESLADKFYNKMLKEYGNKSYIDKNPKLKYYNMSEIINYSVEMYDKDVVLIKEHTKDIKLFEVNVSMG.

This is an uncharacterized protein from Methanocaldococcus jannaschii (strain ATCC 43067 / DSM 2661 / JAL-1 / JCM 10045 / NBRC 100440) (Methanococcus jannaschii).